The chain runs to 807 residues: Sucrose synthase 2 (807 aa).

Residues 274-752 (MVFNVVILSP…GLKRIYERYT (479 aa)) form a GT-B glycosyltransferase region.

Belongs to the glycosyltransferase 1 family. Plant sucrose synthase subfamily. Detected in the whole plant but at lower levels. Predominantly expressed in developing siliques. Also detected in the root tip. Detected in the embryo, endosperm and seed coat (at the protein level).

It localises to the cytoplasm. The protein localises to the plastid membrane. The enzyme catalyses an NDP-alpha-D-glucose + D-fructose = a ribonucleoside 5'-diphosphate + sucrose + H(+). In terms of biological role, sucrose-cleaving enzyme that provides UDP-glucose and fructose for various metabolic pathways. Modulates metabolic homeostasis and directs carbon towards starch synthesis in developing seeds. This chain is Sucrose synthase 2 (SUS2), found in Arabidopsis thaliana (Mouse-ear cress).